A 254-amino-acid chain; its full sequence is Thiazole synthase (254 aa).

Residue K95 is the Schiff-base intermediate with DXP of the active site. Residues G156, A182–G183, and N204–T205 contribute to the 1-deoxy-D-xylulose 5-phosphate site.

This sequence belongs to the ThiG family. In terms of assembly, homotetramer. Forms heterodimers with either ThiH or ThiS.

The protein localises to the cytoplasm. The catalysed reaction is [ThiS sulfur-carrier protein]-C-terminal-Gly-aminoethanethioate + 2-iminoacetate + 1-deoxy-D-xylulose 5-phosphate = [ThiS sulfur-carrier protein]-C-terminal Gly-Gly + 2-[(2R,5Z)-2-carboxy-4-methylthiazol-5(2H)-ylidene]ethyl phosphate + 2 H2O + H(+). Its pathway is cofactor biosynthesis; thiamine diphosphate biosynthesis. Functionally, catalyzes the rearrangement of 1-deoxy-D-xylulose 5-phosphate (DXP) to produce the thiazole phosphate moiety of thiamine. Sulfur is provided by the thiocarboxylate moiety of the carrier protein ThiS. In vitro, sulfur can be provided by H(2)S. The sequence is that of Thiazole synthase from Shewanella sp. (strain MR-7).